The following is a 214-amino-acid chain: Alpha-S1-casein (214 aa).

Residues 1–15 (MKLLILTCLVAVALA) form the signal peptide. A Phosphoserine; in allele A modification is found at S27. S56 carries the phosphoserine; in allele C modification. Phosphoserine occurs at positions 61 and 63. The tract at residues 69 to 91 (MEDAKQMKAGSSSSSEEIVPNSA) is disordered. S79 bears the Phosphoserine; in alleles A and C mark. Residue S80 is modified to Phosphoserine. Residue S81 is modified to Phosphoserine; in alleles A and C. Position 82 is a phosphoserine (S82). S83 is subject to Phosphoserine; in alleles A and C. S90 is modified (phosphoserine). The interval 105 to 111 (RYLGYLE) is opioid-like peptide sequence. A Phosphoserine modification is found at S130.

It belongs to the alpha-casein family. Mammary gland specific. Secreted in milk.

It localises to the secreted. Its function is as follows. Important role in the capacity of milk to transport calcium phosphate. The polypeptide is Alpha-S1-casein (CSN1S1) (Ovis aries (Sheep)).